A 1120-amino-acid polypeptide reads, in one-letter code: Elongation factor-like GTPase 1 (1120 aa).

The 256-residue stretch at 17-272 (ANIRNICVLA…LMKTLWGDYY (256 aa)) folds into the tr-type G domain. Residues 26–33 (AHVDHGKT), 92–96 (DSPGH), and 146–149 (NKID) each bind GTP. The disordered stretch occupies residues 430–496 (PRPLTQEEIA…VESMTPKPVL (67 aa)). Composition is skewed to basic and acidic residues over residues 438–452 (IAQR…HAEK) and 475–484 (PKGEEPRGDE). K528 is modified (N6-acetyllysine). The tract at residues 907-930 (ASDLAKEGQEENETCSGGNENQEL) is disordered. A compositionally biased stretch (polar residues) spans 920-930 (TCSGGNENQEL).

Belongs to the TRAFAC class translation factor GTPase superfamily. Classic translation factor GTPase family. Associates with the 60S ribosomal subunit. Found in a complex consisting of the 60S ribosomal subunit, SBDS and EFL1. Interacts with SBDS and binds to GTP and GDP; the interaction with SBDS decreases EFL1 affinity for GDP and facilitates GDP release. As to expression, expressed at low levels in brain. Expression is highly increased in glioma tissues.

The enzyme catalyses GTP + H2O = GDP + phosphate + H(+). With respect to regulation, GTPase activity is stimulated in the presence of 60S ribosome subunits. Its function is as follows. GTPase involved in the biogenesis of the 60S ribosomal subunit and translational activation of ribosomes. Together with SBDS, triggers the GTP-dependent release of EIF6 from 60S pre-ribosomes in the cytoplasm, thereby activating ribosomes for translation competence by allowing 80S ribosome assembly and facilitating EIF6 recycling to the nucleus, where it is required for 60S rRNA processing and nuclear export. This Homo sapiens (Human) protein is Elongation factor-like GTPase 1.